Reading from the N-terminus, the 119-residue chain is Large ribosomal subunit protein bL20 (119 aa).

It belongs to the bacterial ribosomal protein bL20 family.

Functionally, binds directly to 23S ribosomal RNA and is necessary for the in vitro assembly process of the 50S ribosomal subunit. It is not involved in the protein synthesizing functions of that subunit. The chain is Large ribosomal subunit protein bL20 from Thermoanaerobacter pseudethanolicus (strain ATCC 33223 / 39E) (Clostridium thermohydrosulfuricum).